Consider the following 141-residue polypeptide: Large ribosomal subunit protein uL14 (141 aa).

This sequence belongs to the universal ribosomal protein uL14 family.

This Tetrahymena thermophila (strain SB210) protein is Large ribosomal subunit protein uL14 (RPL23).